Reading from the N-terminus, the 424-residue chain is DNA primase DnaG (424 aa).

The Toprim domain maps to 171–245 (DDIIVVEGRA…DVDFVARAPP (75 aa)). 3 residues coordinate Mg(2+): E177, D219, and D221.

This sequence belongs to the archaeal DnaG primase family. In terms of assembly, forms a ternary complex with MCM helicase and DNA. Mg(2+) serves as cofactor.

It carries out the reaction ssDNA + n NTP = ssDNA/pppN(pN)n-1 hybrid + (n-1) diphosphate.. Its function is as follows. RNA polymerase that catalyzes the synthesis of short RNA molecules used as primers for DNA polymerase during DNA replication. This is DNA primase DnaG from Methanocaldococcus jannaschii (strain ATCC 43067 / DSM 2661 / JAL-1 / JCM 10045 / NBRC 100440) (Methanococcus jannaschii).